Consider the following 235-residue polypeptide: BPI fold-containing family A member 2 (235 aa).

Residues 1 to 20 (MFQLGSLVVLCGLLIGTSES) form the signal peptide. Cysteines 161 and 204 form a disulfide.

The protein belongs to the BPI/LBP/Plunc superfamily. Plunc family. Expressed in parotid, submandibular and sublingual glands.

It is found in the secreted. Its function is as follows. Has strong antibacterial activity against P.aeruginosa. The chain is BPI fold-containing family A member 2 (Bpifa2) from Rattus norvegicus (Rat).